A 268-amino-acid chain; its full sequence is GTP cyclohydrolase FolE2 (268 aa).

Belongs to the GTP cyclohydrolase IV family.

The enzyme catalyses GTP + H2O = 7,8-dihydroneopterin 3'-triphosphate + formate + H(+). It functions in the pathway cofactor biosynthesis; 7,8-dihydroneopterin triphosphate biosynthesis; 7,8-dihydroneopterin triphosphate from GTP: step 1/1. Its function is as follows. Converts GTP to 7,8-dihydroneopterin triphosphate. The chain is GTP cyclohydrolase FolE2 from Paraburkholderia phymatum (strain DSM 17167 / CIP 108236 / LMG 21445 / STM815) (Burkholderia phymatum).